We begin with the raw amino-acid sequence, 402 residues long: 3-isopropylmalate dehydratase large subunit 2 (402 aa).

The [4Fe-4S] cluster site is built by Cys-280, Cys-341, and Cys-344.

It belongs to the aconitase/IPM isomerase family. LeuC type 2 subfamily. As to quaternary structure, heterodimer of LeuC and LeuD. Requires [4Fe-4S] cluster as cofactor.

The enzyme catalyses (2R,3S)-3-isopropylmalate = (2S)-2-isopropylmalate. It participates in amino-acid biosynthesis; L-leucine biosynthesis; L-leucine from 3-methyl-2-oxobutanoate: step 2/4. Catalyzes the isomerization between 2-isopropylmalate and 3-isopropylmalate, via the formation of 2-isopropylmaleate. In Methanopyrus kandleri (strain AV19 / DSM 6324 / JCM 9639 / NBRC 100938), this protein is 3-isopropylmalate dehydratase large subunit 2.